A 228-amino-acid polypeptide reads, in one-letter code: Endo-1,4-beta-xylanase B (228 aa).

An N-terminal signal peptide occupies residues 1–19 (MVSFTYLLAAVSAVTGAVA). In terms of domain architecture, GH11 spans 37 to 227 (KRTSPTTGVN…SSGQATMTVS (191 aa)). Catalysis depends on Glu-122, which acts as the Nucleophile. The active-site Proton donor is the Glu-214.

Belongs to the glycosyl hydrolase 11 (cellulase G) family.

Its subcellular location is the secreted. The enzyme catalyses Endohydrolysis of (1-&gt;4)-beta-D-xylosidic linkages in xylans.. Its pathway is glycan degradation; xylan degradation. Its activity is regulated as follows. Inhibited by the proteinaceous endoxylanase inhibitor I from T.aestivum (TAXI-I). Functionally, endo-1,4-beta-xylanase involved in the hydrolysis of xylan, a major structural heterogeneous polysaccharide found in plant biomass representing the second most abundant polysaccharide in the biosphere, after cellulose. Plays an important role in causing fusarium head blight (FHB) on cereal crops. Induces cell death and hydrogen peroxide accumulation in infected wheat leaves. The chain is Endo-1,4-beta-xylanase B (XYLB) from Gibberella zeae (strain ATCC MYA-4620 / CBS 123657 / FGSC 9075 / NRRL 31084 / PH-1) (Wheat head blight fungus).